Here is a 567-residue protein sequence, read N- to C-terminus: Unguisins hydrolase ungD (567 aa).

This sequence belongs to the peptidase S12 family.

It functions in the pathway secondary metabolite biosynthesis. Its function is as follows. Hydrolase; part of the gene cluster that mediates the biosynthesis of the unguisins, gamma-aminobutyric acid (GABA)-containing fungal cyclic heptapeptides with the amino acid sequence cyclo-(D-Ala1-D-Val2-L-Phe3-D-Val4-D-Ala5-D-Trp6-GABA7) for unguisin A and cyclo-(D-Ala1-D-Val2-L-Leu3-D-Val4-D-Ala5-D-Trp6-GABA7) for unguisin B. Within the pathway, the hydrolase ungD catalyzes the hydrolysis between the D-tryptophan and GABA residues of unguisins A and B to produce the corresponding linear peptides. The alanine racemase ungC catalyzes the interconversion of L-alanine and D-alanine, providing the D-alanine which is accepted by the first adenylation domain of the nonribosomal peptide synthetase (NRPS) ungA. UngA is the main enzyme within the cluster which condenses the 7 residues using its respective 7 modules. The terminal condensation domain (Ct) is involved in cyclization with D-alanine and thereby releasing of unguisins A and B. The protein is Unguisins hydrolase ungD of Aspergillus violaceofuscus (strain CBS 115571).